The sequence spans 642 residues: Regulator of MON1-CCZ1 complex (642 aa).

In terms of domain architecture, Mic1 spans 462–616; the sequence is RPYTESILML…KLYETLSFPK (155 aa).

Belongs to the RMC1 family. Component of the Mon1-Ccz1 guanyl-nucleotide exchange factor complex made up of Mon1, Ccz1 and Bulli; the interaction of Bulli with the Mon1-Ccz1 heterodimer is mediated via the C-terminal Mic1 domain of Bulli. Mon1 and Ccz1 form a stable complex which displays Rab7 GEF activity with or without Bulli; GEF activity is enhanced by Bulli possibly by improving membrane association of the complex.

It localises to the late endosome. Positive regulator of the Rab7 guanyl-nucleotide exchange activity of the Mon1-Ccz1 complex, possibly by enhancing its endosomal membrane association. As part of the Mon1-Ccz1 complex involved in endolysosomal biogenesis possibly by mediating Rab conversion, the replacement of Rab5 with Rab7 during late endosome maturation. This is Regulator of MON1-CCZ1 complex from Drosophila melanogaster (Fruit fly).